The primary structure comprises 296 residues: Probable AP endonuclease (296 aa).

The cysteines at positions 16 and 20 are disulfide-linked. His-78, His-115, Glu-142, His-182, His-218, Asp-231, His-233, and Glu-271 together coordinate Zn(2+).

This sequence belongs to the AP endonuclease 2 family. Requires Zn(2+) as cofactor.

The protein localises to the host nucleus. It is found in the host cytoplasm. It localises to the virion. Endonuclease of the viral base excision repair system that catalyzes DNA cleavage reaction at the apurinic or apyrimidinic sites (AP sites). Cleaves phosphodiester bonds on the 5' side of AP sites. In addition to endonuclease activity, the AP endonuclease has a proofreading 3'-5' exonuclease activity that is considerably more efficient in the elimination of a mismatch than in that of a correctly paired base. Displays 3'-phosphatase and 3'-repair diesterase activities. The single nucleotide gaps generated by the AP endonuclease are filled by the viral repair DNA polymerase X and the DNA ligase. This is Probable AP endonuclease from Ornithodoros (relapsing fever ticks).